The chain runs to 199 residues: ATP-dependent Clp protease proteolytic subunit (199 aa).

Catalysis depends on S97, which acts as the Nucleophile. Residue H122 is part of the active site.

Belongs to the peptidase S14 family. Fourteen ClpP subunits assemble into 2 heptameric rings which stack back to back to give a disk-like structure with a central cavity, resembling the structure of eukaryotic proteasomes.

Its subcellular location is the cytoplasm. The catalysed reaction is Hydrolysis of proteins to small peptides in the presence of ATP and magnesium. alpha-casein is the usual test substrate. In the absence of ATP, only oligopeptides shorter than five residues are hydrolyzed (such as succinyl-Leu-Tyr-|-NHMec, and Leu-Tyr-Leu-|-Tyr-Trp, in which cleavage of the -Tyr-|-Leu- and -Tyr-|-Trp bonds also occurs).. In terms of biological role, cleaves peptides in various proteins in a process that requires ATP hydrolysis. Has a chymotrypsin-like activity. Plays a major role in the degradation of misfolded proteins. The polypeptide is ATP-dependent Clp protease proteolytic subunit (Geobacter sulfurreducens (strain ATCC 51573 / DSM 12127 / PCA)).